Consider the following 833-residue polypeptide: F1 capsule-anchoring protein (833 aa).

Positions 1–25 (MRYSKLFLCAGLTLATLPCWGRAYT) are cleaved as a signal peptide. A disulfide bridge connects residues cysteine 807 and cysteine 829.

Belongs to the fimbrial export usher family.

It localises to the cell outer membrane. In terms of biological role, a probable role in capsular biogenesis. It is likely that the caf1A molecule binds F1 antigen subunits during the extracellular secretion process. The protein is F1 capsule-anchoring protein (caf1A) of Yersinia pestis.